The chain runs to 147 residues: HTH-type transcriptional regulator MgrA (147 aa).

Positions K8–H139 constitute an HTH marR-type domain. Residues V55–Q78 constitute a DNA-binding region (H-T-H motif).

The protein resides in the cytoplasm. Its function is as follows. Regulatory protein involved in autolytic activity, multidrug resistance and virulence. Controls autolysis by inactivating LytM, LytN (autolysins) and SarV (autolysis activator) and activating ArlRS, LrgAB and LytSR (autolysis inhibitors). Acts as a dual regulator for resistance to multiple drugs by inactivating NorB and tet38 and activating NorA. Positively controls the expression of virulence accessory gene regulator (agr) to promote alpha-hemolysin (hla) transcription and down-regulates staphylococcal accessory regulator (sarS), leading to repression of surface protein A (spa). Binds directly to hla promoter to augment its activation. Binds to sarS promoter to down-regulate spa expression. The sequence is that of HTH-type transcriptional regulator MgrA (mgrA) from Staphylococcus aureus (strain NCTC 8325 / PS 47).